A 187-amino-acid polypeptide reads, in one-letter code: Inner membrane-spanning protein YciB (187 aa).

5 helical membrane-spanning segments follow: residues 25–45 (ATGALIAATAIQIVVTYALYK), 50–70 (MQLITFLMVAIFGGMTIFLHD), 76–96 (WKVTIVYAVFAIGLTVSHVMG), 118–138 (INWAWVGFFTFCAGLNIYVAY), and 148–168 (FKVFGLLAATLVFTVLTGGYI).

The protein belongs to the YciB family.

It is found in the cell inner membrane. Functionally, plays a role in cell envelope biogenesis, maintenance of cell envelope integrity and membrane homeostasis. This Vibrio vulnificus (strain CMCP6) protein is Inner membrane-spanning protein YciB.